Consider the following 886-residue polypeptide: Coatomer subunit gamma (886 aa).

HEAT repeat units follow at residues 66–103, 288–325, 327–359, 360–397, and 472–509; these read VEATEVFFSVTKLFQSKDTGLRRMVYLIIKELSPSSDE, RELTPAITVLQLFLSSPRPVLRFAAVRTLNKVAMTHPM, VTNCNIDMESLISDQNRSIATLAITTLLKTGNE, SSVERLMKQITNFMSDIADEFKIVVVDAIRSLCVKFPL, and SDPSKYIRYIYNRVHLENATVRAAAVSTLAKFGFMVES. Positions 592–613 are disordered; that stretch reads SQPLAEKKAQGKKPTGLGAPPA.

The protein belongs to the COPG family. Oligomeric complex that consists of at least the alpha, beta, beta', gamma, delta, epsilon and zeta subunits.

It is found in the cytoplasm. The protein resides in the golgi apparatus membrane. It localises to the cytoplasmic vesicle. Its subcellular location is the COPI-coated vesicle membrane. Its function is as follows. The coatomer is a cytosolic protein complex that binds to dilysine motifs and reversibly associates with Golgi non-clathrin-coated vesicles, which further mediate biosynthetic protein transport from the ER, via the Golgi up to the trans Golgi network. Coatomer complex is required for budding from Golgi membranes, and is essential for the retrograde Golgi-to-ER transport of dilysine-tagged proteins. The chain is Coatomer subunit gamma from Arabidopsis thaliana (Mouse-ear cress).